A 266-amino-acid chain; its full sequence is Glutaconate CoA-transferase subunit B (266 aa).

The active site involves E54.

Belongs to the 3-oxoacid CoA-transferase subunit B family. In terms of assembly, heterooctamer of four A and four B subunits.

It localises to the cytoplasm. It carries out the reaction trans-glutaconate + acetyl-CoA = (2E)-glutaconyl-CoA + acetate. Its pathway is amino-acid degradation; L-glutamate degradation via hydroxyglutarate pathway; crotonoyl-CoA from L-glutamate: step 3/5. Its function is as follows. Catalyzes the transfer of the CoA moiety from acetyl-CoA to (R)-2-hydroxyglutarate and related compounds like glutaconate. This is Glutaconate CoA-transferase subunit B (gctB) from Acidaminococcus fermentans (strain ATCC 25085 / DSM 20731 / CCUG 9996 / CIP 106432 / VR4).